The sequence spans 400 residues: Argininosuccinate synthase (400 aa).

ATP contacts are provided by residues 10-18 (AYSGGVDTS) and Ala38. Tyr89 contacts L-citrulline. Residue Gly119 participates in ATP binding. L-aspartate-binding residues include Thr121, Asn125, and Asp126. Asn125 contributes to the L-citrulline binding site. L-citrulline-binding residues include Arg129, Ser177, Ser186, Glu262, and Tyr274.

The protein belongs to the argininosuccinate synthase family. Type 1 subfamily. As to quaternary structure, homotetramer.

It localises to the cytoplasm. The enzyme catalyses L-citrulline + L-aspartate + ATP = 2-(N(omega)-L-arginino)succinate + AMP + diphosphate + H(+). It participates in amino-acid biosynthesis; L-arginine biosynthesis; L-arginine from L-ornithine and carbamoyl phosphate: step 2/3. The polypeptide is Argininosuccinate synthase (Synechococcus elongatus (strain ATCC 33912 / PCC 7942 / FACHB-805) (Anacystis nidulans R2)).